Reading from the N-terminus, the 317-residue chain is Ribosomal RNA small subunit methyltransferase H (317 aa).

S-adenosyl-L-methionine contacts are provided by residues 37–39 (AGH), Asp56, Phe85, Asp106, and Gln113.

The protein belongs to the methyltransferase superfamily. RsmH family.

The protein localises to the cytoplasm. It carries out the reaction cytidine(1402) in 16S rRNA + S-adenosyl-L-methionine = N(4)-methylcytidine(1402) in 16S rRNA + S-adenosyl-L-homocysteine + H(+). In terms of biological role, specifically methylates the N4 position of cytidine in position 1402 (C1402) of 16S rRNA. The polypeptide is Ribosomal RNA small subunit methyltransferase H (Lactococcus lactis subsp. cremoris (strain SK11)).